The primary structure comprises 357 residues: Outer membrane protein YedS (357 aa).

Positions 1 to 21 are cleaved as a signal peptide; that stretch reads MKRKVLAMLVPALLVAGAANA.

It belongs to the Gram-negative porin family.

Its subcellular location is the cell outer membrane. Functionally, forms pores that allow passive diffusion of small molecules across the outer membrane. Plays a role in resistance to carbapenems; this carbapenem-resistant, noncarbapenemase-producing clinical isolate has a deletion in ompF and a mutated marR gene that does not induce expression of this protein. However if this gene is overexpressed, or if wild-type marR is introduced, this leads to decreased resistance to the carbapenem antibiotics ertapenem, imipenem and meropenem. This Escherichia coli protein is Outer membrane protein YedS.